We begin with the raw amino-acid sequence, 270 residues long: Putative ABC transporter ATP-binding protein MG304 (270 aa).

An ABC transporter domain is found at 1–232; the sequence is MLQVKNLSFK…LDLFHNHHFN (232 aa). 36–43 contacts ATP; it reads GHNGSGKS.

The protein belongs to the ABC transporter superfamily.

The polypeptide is Putative ABC transporter ATP-binding protein MG304 (Mycoplasma genitalium (strain ATCC 33530 / DSM 19775 / NCTC 10195 / G37) (Mycoplasmoides genitalium)).